Here is a 75-residue protein sequence, read N- to C-terminus: Protein Tlp homolog (75 aa).

The interval 53-75 (REALDGMREEIKDEARDKKNGYM) is disordered.

It belongs to the Tlp family.

This is Protein Tlp homolog from Clostridium botulinum (strain ATCC 19397 / Type A).